The sequence spans 334 residues: Protein-methionine-sulfoxide reductase catalytic subunit MsrP (334 aa).

The segment at residues 1–44 (MKKNQFLKESDVTAESVFFMTRRQVLKALGISAAALSLPHAAHA) is a signal peptide (tat-type signal). Mo-molybdopterin contacts are provided by residues N88, 91–92 (YE), C146, T181, N233, R238, and 249–251 (GIK).

The protein belongs to the MsrP family. In terms of assembly, heterodimer of a catalytic subunit (MsrP) and a heme-binding subunit (MsrQ). The cofactor is Mo-molybdopterin. Predicted to be exported by the Tat system. The position of the signal peptide cleavage has not been experimentally proven.

It is found in the periplasm. The enzyme catalyses L-methionyl-[protein] + a quinone + H2O = L-methionyl-(S)-S-oxide-[protein] + a quinol. It carries out the reaction L-methionyl-[protein] + a quinone + H2O = L-methionyl-(R)-S-oxide-[protein] + a quinol. Functionally, part of the MsrPQ system that repairs oxidized periplasmic proteins containing methionine sulfoxide residues (Met-O), using respiratory chain electrons. Thus protects these proteins from oxidative-stress damage caused by reactive species of oxygen and chlorine generated by the host defense mechanisms. MsrPQ is essential for the maintenance of envelope integrity under bleach stress, rescuing a wide series of structurally unrelated periplasmic proteins from methionine oxidation, including the primary periplasmic chaperone SurA and the lipoprotein Pal. The catalytic subunit MsrP is non-stereospecific, being able to reduce both (R-) and (S-) diastereoisomers of methionine sulfoxide. The sequence is that of Protein-methionine-sulfoxide reductase catalytic subunit MsrP from Escherichia coli (strain 55989 / EAEC).